Here is an 871-residue protein sequence, read N- to C-terminus: Translation initiation factor IF-2 (871 aa).

2 disordered regions span residues 60-101 (KKNI…QEVK) and 184-203 (ESLK…KKES). The segment covering 61–72 (KNIKTPTAKKPK) has biased composition (basic residues). Over residues 73-101 (KENIKEQEKLNESEKKEPKKEEKLKQEVK) the composition is skewed to basic and acidic residues. The 168-residue stretch at 370–537 (TRAPVITIMG…IVLLQADILE (168 aa)) folds into the tr-type G domain. Residues 379–386 (GHVDHGKT) are G1. 379 to 386 (GHVDHGKT) contributes to the GTP binding site. A G2 region spans residues 404–408 (GITQH). Residues 425-428 (DTPG) form a G3 region. GTP is bound by residues 425 to 429 (DTPGH) and 479 to 482 (NKMD). Positions 479–482 (NKMD) are G4. The segment at 515–517 (SAK) is G5.

This sequence belongs to the TRAFAC class translation factor GTPase superfamily. Classic translation factor GTPase family. IF-2 subfamily.

It localises to the cytoplasm. One of the essential components for the initiation of protein synthesis. Protects formylmethionyl-tRNA from spontaneous hydrolysis and promotes its binding to the 30S ribosomal subunits. Also involved in the hydrolysis of GTP during the formation of the 70S ribosomal complex. In Campylobacter jejuni subsp. jejuni serotype O:6 (strain 81116 / NCTC 11828), this protein is Translation initiation factor IF-2.